A 304-amino-acid polypeptide reads, in one-letter code: HTH-type transcriptional regulator BenM (304 aa).

In terms of domain architecture, HTH lysR-type spans 1–58; sequence MELRHLRYFVAVVEEQSFTKAADKLCIAQPPLSRQIQNLEEELGIQLLERGSRPVKTT. The segment at residues 18–37 is a DNA-binding region (H-T-H motif); the sequence is FTKAADKLCIAQPPLSRQIQ. Benzoate-binding residues include Ser-99 and Leu-104. Ser-99 contributes to the cis,cis-muconate binding site. Residue Thr-128 participates in cis,cis-muconate binding. Benzoate-binding residues include Phe-144, Arg-160, and Asn-202. Residue Phe-203 coordinates cis,cis-muconate. Tyr-293 is a benzoate binding site.

It belongs to the LysR transcriptional regulatory family. As to quaternary structure, homotetramer; dimer of dimers. The dimers can also associate to form linear, higher oligomers (in vitro).

Its function is as follows. Positive regulator of the ben and cat genes for benzoate degradation. BenM is necessary for ben gene expression but not for expression of the cat genes, which can be regulated by CatM. Binds to the inducers cis,cis-muconate and benzoate. This Acinetobacter baylyi (strain ATCC 33305 / BD413 / ADP1) protein is HTH-type transcriptional regulator BenM (benM).